The primary structure comprises 714 residues: Fumarate reductase flavoprotein subunit (714 aa).

FAD contacts are provided by residues 13–16, 42–44, and 49–50; these read GGLA, SHS, and GG. His-43 carries the tele-8alpha-FAD histidine modification. Residues His-257 and Arg-273 contribute to the active site. Residues Glu-420 and 436 to 437 contribute to the FAD site; that span reads SV.

It belongs to the FAD-dependent oxidoreductase 2 family. FRD/SDH subfamily. As to quaternary structure, part of an enzyme complex containing three subunits: a flavoprotein (frdA), an iron-sulfur protein (frdB), and diheme cytochrome b (frdC). It depends on FAD as a cofactor.

The protein localises to the cell inner membrane. It carries out the reaction a quinone + succinate = fumarate + a quinol. Functionally, the fumarate reductase enzyme complex is required for fumarate respiration. This chain is Fumarate reductase flavoprotein subunit (frdA), found in Helicobacter pylori (strain J99 / ATCC 700824) (Campylobacter pylori J99).